We begin with the raw amino-acid sequence, 331 residues long: Phosphoenolpyruvate transferase (331 aa).

Residue Asp-63 participates in 7,8-didemethyl-8-hydroxy-5-deazariboflavin binding.

This sequence belongs to the CofD family. In terms of assembly, homodimer. Requires Mg(2+) as cofactor.

It carries out the reaction enolpyruvoyl-2-diphospho-5'-guanosine + 7,8-didemethyl-8-hydroxy-5-deazariboflavin = dehydro coenzyme F420-0 + GMP + H(+). The protein operates within cofactor biosynthesis; coenzyme F420 biosynthesis. Its function is as follows. Catalyzes the transfer of the phosphoenolpyruvate moiety from enoylpyruvoyl-2-diphospho-5'-guanosine (EPPG) to 7,8-didemethyl-8-hydroxy-5-deazariboflavin (FO) with the formation of dehydro coenzyme F420-0 and GMP. This Mycobacterium bovis (strain ATCC BAA-935 / AF2122/97) protein is Phosphoenolpyruvate transferase.